Consider the following 363-residue polypeptide: Probable mannitol dehydrogenase 3 (363 aa).

The Zn(2+) site is built by Cys-51, His-73, Cys-104, Cys-107, Cys-110, Cys-118, and Cys-168.

It belongs to the zinc-containing alcohol dehydrogenase family. The cofactor is Zn(2+).

The enzyme catalyses D-mannitol + NAD(+) = D-mannose + NADH + H(+). Its function is as follows. Oxidizes mannitol to mannose. Provides the initial step by which translocated mannitol is committed to central metabolism and, by regulating mannitol pool size, is important in regulating salt tolerance at the cellular level. The polypeptide is Probable mannitol dehydrogenase 3 (CAD3) (Stylosanthes humilis (Townsville stylo)).